Consider the following 55-residue polypeptide: Large ribosomal subunit protein bL33 (55 aa).

Belongs to the bacterial ribosomal protein bL33 family.

The polypeptide is Large ribosomal subunit protein bL33 (Novosphingobium aromaticivorans (strain ATCC 700278 / DSM 12444 / CCUG 56034 / CIP 105152 / NBRC 16084 / F199)).